Here is a 247-residue protein sequence, read N- to C-terminus: Segregation and condensation protein A (247 aa).

This sequence belongs to the ScpA family. Component of a cohesin-like complex composed of ScpA, ScpB and the Smc homodimer, in which ScpA and ScpB bind to the head domain of Smc. The presence of the three proteins is required for the association of the complex with DNA.

It localises to the cytoplasm. Participates in chromosomal partition during cell division. May act via the formation of a condensin-like complex containing Smc and ScpB that pull DNA away from mid-cell into both cell halves. The chain is Segregation and condensation protein A from Bacillus anthracis (strain A0248).